We begin with the raw amino-acid sequence, 230 residues long: Ribosomal RNA large subunit methyltransferase E (230 aa).

The S-adenosyl-L-methionine site is built by glycine 82, tryptophan 84, aspartate 100, aspartate 116, and aspartate 140. Residue lysine 180 is the Proton acceptor of the active site.

Belongs to the class I-like SAM-binding methyltransferase superfamily. RNA methyltransferase RlmE family.

The protein resides in the cytoplasm. The catalysed reaction is uridine(2552) in 23S rRNA + S-adenosyl-L-methionine = 2'-O-methyluridine(2552) in 23S rRNA + S-adenosyl-L-homocysteine + H(+). Specifically methylates the uridine in position 2552 of 23S rRNA at the 2'-O position of the ribose in the fully assembled 50S ribosomal subunit. In Granulibacter bethesdensis (strain ATCC BAA-1260 / CGDNIH1), this protein is Ribosomal RNA large subunit methyltransferase E.